The chain runs to 263 residues: MPPLLASTSSTSPLLLASRLRGGGGCGCGGAPLLHRTRRGFLAPSTTTTQTTRTSFAAMSWLGKLGLGGLGGSPRASAASAALAQGPDEDRPAAGNEFAQFGAGCFWGVELAFQRVPGVTRTEVGYSQGNLHDPTYEDVCTGATYHNEVVRVHYDVSACKFDDLLDVFWARHDPTTPNRQGNDVGTQYRSGIYYYTPEQEKAARESLEKQQKLLNRTIVTEILPAKRFYRAEEYHQQYLAKGGRFGFRQSAEKGCNDPIRCYG.

The N-terminal 75 residues, 1–75 (MPPLLASTSS…GLGGLGGSPR (75 aa)), are a transit peptide targeting the chloroplast.

It belongs to the MsrA Met sulfoxide reductase family. Expressed in roots, stems, leaves and flowers.

Its subcellular location is the plastid. The protein localises to the chloroplast. It catalyses the reaction L-methionyl-[protein] + [thioredoxin]-disulfide + H2O = L-methionyl-(S)-S-oxide-[protein] + [thioredoxin]-dithiol. It carries out the reaction [thioredoxin]-disulfide + L-methionine + H2O = L-methionine (S)-S-oxide + [thioredoxin]-dithiol. Functionally, catalyzes the reduction of methionine sulfoxide (MetSO) to methionine in proteins. Involved in abiotic and salt stress responses. Plays a protective role against oxidative stress by restoring activity to proteins that have been inactivated by methionine oxidation. MSRA family specifically reduces the MetSO S-enantiomer. This is Peptide methionine sulfoxide reductase A4, chloroplastic from Oryza sativa subsp. japonica (Rice).